Consider the following 156-residue polypeptide: Small ribosomal subunit protein uS7 (156 aa).

The protein belongs to the universal ribosomal protein uS7 family. Part of the 30S ribosomal subunit. Contacts proteins S9 and S11.

Its function is as follows. One of the primary rRNA binding proteins, it binds directly to 16S rRNA where it nucleates assembly of the head domain of the 30S subunit. Is located at the subunit interface close to the decoding center, probably blocks exit of the E-site tRNA. This is Small ribosomal subunit protein uS7 from Photobacterium profundum (strain SS9).